The chain runs to 119 residues: Secreted RxLR effector protein RXLR-C04 (119 aa).

An N-terminal signal peptide occupies residues 1–22; it reads MRLSYIFVVVATIITNCDIASA. The short motif at 40 to 77 is the RxLR-dEER element; that stretch reads RILRQTNDSDDLEPIRHAMLDMELLEKIAKDPKYAEEV. Residue Asn46 is glycosylated (N-linked (GlcNAc...) asparagine).

The protein belongs to the RxLR effector family.

The protein resides in the secreted. It localises to the host cytoplasm. The protein localises to the host nucleus. Its function is as follows. Secreted effector that suppresses pattern-triggered immunity (PTI) in plant host. In Plasmopara halstedii (Downy mildew of sunflower), this protein is Secreted RxLR effector protein RXLR-C04.